Reading from the N-terminus, the 187-residue chain is Elongation factor P (187 aa).

The protein belongs to the elongation factor P family.

It is found in the cytoplasm. The protein operates within protein biosynthesis; polypeptide chain elongation. In terms of biological role, involved in peptide bond synthesis. Stimulates efficient translation and peptide-bond synthesis on native or reconstituted 70S ribosomes in vitro. Probably functions indirectly by altering the affinity of the ribosome for aminoacyl-tRNA, thus increasing their reactivity as acceptors for peptidyl transferase. The polypeptide is Elongation factor P (Helicobacter pylori (strain P12)).